The sequence spans 350 residues: C5a anaphylatoxin chemotactic receptor 1 (350 aa).

The Extracellular portion of the chain corresponds to 1-36 (APMENSTYDYTNYDSLGTLDPSTPVDNTVRRLRPTT). N-linked (GlcNAc...) asparagine glycosylation occurs at asparagine 5. Sulfotyrosine occurs at positions 10 and 13. Residues 37–63 (IVALVIYMAVFLVGVPGNALVVWVTAL) form a helical membrane-spanning segment. The Cytoplasmic portion of the chain corresponds to 64 to 68 (EAKRT). Residues 69-92 (VNAIWFLNLAVADLLSCLALPILF) form a helical membrane-spanning segment. At 93–109 (VSIIQEGHWPFGRAACS) the chain is on the extracellular side. An intrachain disulfide couples cysteine 108 to cysteine 187. The helical transmembrane segment at 110–131 (VLPSLILLNMYASILLLATISA) threads the bilayer. Over 132 to 152 (DRFLLVFNPIWCQNTRGAGLA) the chain is Cytoplasmic. The chain crosses the membrane as a helical span at residues 153–173 (WLACCVAWGLALLLTIPSFLY). The Extracellular portion of the chain corresponds to 174–200 (RKVLQDDYPPKTTCGVDYGHEGVRAER). A helical membrane pass occupies residues 201–226 (AVAIVRLVVGFLLPLFTLSVCYTFLL). Over 227 to 242 (LRTWSRNGTRSTKTLK) the chain is Cytoplasmic. A helical transmembrane segment spans residues 243–265 (VVVAVVVSFFIFWLPYQVMGMIL). Over 266 to 282 (ALLHPSSATFRWAIRLD) the chain is Extracellular. A helical membrane pass occupies residues 283–303 (PLCIALAYVNCCINPIIYVVA). Residues 304–350 (GKGFQGQLRKSLPSLLRNVLAEESVIQGSKSFSRSTVDTVADKCQAV) are Cytoplasmic-facing. 6 positions are modified to phosphoserine: serine 314, serine 317, serine 327, serine 332, serine 334, and serine 338.

This sequence belongs to the G-protein coupled receptor 1 family. In terms of assembly, homodimer. May also form higher-order oligomers. Interacts (when phosphorylated) with ARRB1 and ARRB2; the interaction is associated with internalization of C5aR. In terms of processing, sulfation plays a critical role in the association of C5aR with C5a, but no significant role in the ability of the receptor to transduce a signal and mobilize calcium in response to a small peptide agonist. Phosphorylated on serine residues in response to C5a binding, resulting in internalization of the receptor and short-term desensitization to C5a.

The protein localises to the cell membrane. Its subcellular location is the cytoplasmic vesicle. Functionally, receptor for the chemotactic and inflammatory peptide anaphylatoxin C5a. The ligand interacts with at least two sites on the receptor: a high-affinity site on the extracellular N-terminus, and a second site in the transmembrane region which activates downstream signaling events. Receptor activation stimulates chemotaxis, granule enzyme release, intracellular calcium release and superoxide anion production. The sequence is that of C5a anaphylatoxin chemotactic receptor 1 (C5AR1) from Oryctolagus cuniculus (Rabbit).